The chain runs to 585 residues: MNIFADFDARIKKTLQDIDLKPKDGGELDLSRIGVEPPRDASHGDIATNAAMVLSKAVGQNPRELAARIAEALKADEDVESVDVAGPGFINLRLKASYWQRELLVMLNEGTDFGRSRLGAGKKVNVEYVSANPTGPMHVGHCRGAVVGDVLANLLKFAGYDVVKEYYINDAGAQIDVLARSVMLRYREALGESIGEIPAGLYPGDYLVRVGQELAGEFGTKLLEMPEAEALAIVKDRTIDAMMAMIRADLDALNVHHDVFYSERKLHVDHARAIRNAINDLTLKGHVYKGKLPPPKGQLPEDWEDREQTLFRSTEVGDDIDRPLMKSDGSFTYFAGDVAYFKDKYDHGFNEMIYVLGADHGGYVKRLEAVARAVSDGKAKLTVLLCQLVKLFRNGEPVRMSKRAGEFITLRDVVDEVGRDPVRFMMLYRKNDAPLDFDFAKVTEQSKDNPVFYVQYASARCHSVFRQAADQLGLVDLDRVAMGSHFEKLTDESEIALVRKLAEYPRLIESAAIHQEPHRLAFYLYDLASSFHSQWNRGAENPDLRFIKVNDPDLSLARLGLVQVVSDVLTSGLTIIGADAPTEMR.

Positions 131-141 (ANPTGPMHVGH) match the 'HIGH' region motif.

Belongs to the class-I aminoacyl-tRNA synthetase family. Monomer.

It localises to the cytoplasm. The enzyme catalyses tRNA(Arg) + L-arginine + ATP = L-arginyl-tRNA(Arg) + AMP + diphosphate. The polypeptide is Arginine--tRNA ligase (Brucella melitensis biotype 1 (strain ATCC 23456 / CCUG 17765 / NCTC 10094 / 16M)).